Consider the following 77-residue polypeptide: Conotoxin VnMEKL-023 (77 aa).

A signal peptide spans 1–19; sequence MQKLTILLLVAAVLMSTQA. Positions 20–37 are excised as a propeptide; it reads LIKGGGEKRPKEKIRFLS. Cystine bridges form between Cys51–Cys65, Cys58–Cys69, and Cys64–Cys74.

Belongs to the conotoxin O2 superfamily. As to expression, expressed by the venom duct.

It is found in the secreted. This is Conotoxin VnMEKL-023 from Conus ventricosus (Mediterranean cone).